We begin with the raw amino-acid sequence, 154 residues long: Ribonuclease P protein component (154 aa).

It belongs to the RnpA family. As to quaternary structure, consists of a catalytic RNA component (M1 or rnpB) and a protein subunit.

The catalysed reaction is Endonucleolytic cleavage of RNA, removing 5'-extranucleotides from tRNA precursor.. In terms of biological role, RNaseP catalyzes the removal of the 5'-leader sequence from pre-tRNA to produce the mature 5'-terminus. It can also cleave other RNA substrates such as 4.5S RNA. The protein component plays an auxiliary but essential role in vivo by binding to the 5'-leader sequence and broadening the substrate specificity of the ribozyme. The protein is Ribonuclease P protein component of Chlorobaculum tepidum (strain ATCC 49652 / DSM 12025 / NBRC 103806 / TLS) (Chlorobium tepidum).